A 325-amino-acid chain; its full sequence is MTAPFVLAVPSKGRLQENAEAFFARAGLALSKPGGARDYRGTIAGLDNVEVAYLSASEIAANLARGSVHFGVTGEDLLRESIADADRRVLLIDGLGFGYANVVVAVPQAWIDVRTMADLDDVTTGFRAQHNRRMRVATKYINLTRGFFAQHNVVDYRIVESAGATEGAPAVGTAEMIVDITTTGATLAANGLKVLDDGIMLRSQANLVASRDADWSDEVRETARVILDQIASRARASKYKEVRTRFAGCNEALLAEAHKRFGVVSPFGGPTSSGMLTLHCPPAQIYGLGSFLREHGADTVSVASLDYVFDKDNPLFSKLAAFLRQ.

It belongs to the ATP phosphoribosyltransferase family. Long subfamily. Requires Mg(2+) as cofactor.

It is found in the cytoplasm. It carries out the reaction 1-(5-phospho-beta-D-ribosyl)-ATP + diphosphate = 5-phospho-alpha-D-ribose 1-diphosphate + ATP. The protein operates within amino-acid biosynthesis; L-histidine biosynthesis; L-histidine from 5-phospho-alpha-D-ribose 1-diphosphate: step 1/9. Its activity is regulated as follows. Feedback inhibited by histidine. Its function is as follows. Catalyzes the condensation of ATP and 5-phosphoribose 1-diphosphate to form N'-(5'-phosphoribosyl)-ATP (PR-ATP). Has a crucial role in the pathway because the rate of histidine biosynthesis seems to be controlled primarily by regulation of HisG enzymatic activity. This is ATP phosphoribosyltransferase from Rhodopseudomonas palustris (strain HaA2).